Consider the following 349-residue polypeptide: Nicotinate-nucleotide--dimethylbenzimidazole phosphoribosyltransferase (349 aa).

Residues 1-20 (MEFATVSPPDPGTAAAARAR) are disordered. The active-site Proton acceptor is the E313.

The protein belongs to the CobT family.

The enzyme catalyses 5,6-dimethylbenzimidazole + nicotinate beta-D-ribonucleotide = alpha-ribazole 5'-phosphate + nicotinate + H(+). The protein operates within nucleoside biosynthesis; alpha-ribazole biosynthesis; alpha-ribazole from 5,6-dimethylbenzimidazole: step 1/2. Functionally, catalyzes the synthesis of alpha-ribazole-5'-phosphate from nicotinate mononucleotide (NAMN) and 5,6-dimethylbenzimidazole (DMB). This Mycolicibacterium paratuberculosis (strain ATCC BAA-968 / K-10) (Mycobacterium paratuberculosis) protein is Nicotinate-nucleotide--dimethylbenzimidazole phosphoribosyltransferase.